A 242-amino-acid polypeptide reads, in one-letter code: Transcriptional activator protein BjaR1 (242 aa).

One can recognise an HTH luxR-type domain in the interval 173–238; it reads TPYPSTRLTP…HAVALAIRHK (66 aa). The segment at residues 197–216 is a DNA-binding region (H-T-H motif); the sequence is AWEIGEILHITQRTAEEHLA.

It belongs to the autoinducer-regulated transcriptional regulatory protein family.

In terms of biological role, transcriptional activator that functions in response to the quorum-sensing autoinducer IV-HSL (isovaleryl-homoserine lactone). Activates BjaI expression. Is sensitive to IV-HSL at concentrations as low as 10 pM. The protein is Transcriptional activator protein BjaR1 (bjaR1) of Bradyrhizobium diazoefficiens (strain JCM 10833 / BCRC 13528 / IAM 13628 / NBRC 14792 / USDA 110).